The chain runs to 1094 residues: RecBCD enzyme subunit RecB (1094 aa).

In terms of domain architecture, UvrD-like helicase ATP-binding spans 1 to 326 (MDRFELLGPL…YTLGVNWRSD (326 aa)). A DNA-binding and helicase activity, interacts with RecC region spans residues 1–713 (MDRFELLGPL…LLRGRRPGQS (713 aa)). 21 to 28 (ASAGTGKT) contributes to the ATP binding site. In terms of domain architecture, UvrD-like helicase C-terminal spans 357–613 (AGHRLASAPR…QIMTVFVAKG (257 aa)). The segment at 775-1094 (TWRRTSYSDL…DLLDRGRLQS (320 aa)) is nuclease activity, interacts with RecD and RecA. Residues histidine 838, aspartate 975, and aspartate 989 each coordinate Mg(2+). Aspartate 989 (for nuclease activity) is an active-site residue.

The protein belongs to the helicase family. UvrD subfamily. As to quaternary structure, heterotrimer of RecB, RecC and RecD. All subunits contribute to DNA-binding. Interacts with RecA. Mg(2+) is required as a cofactor.

The enzyme catalyses Exonucleolytic cleavage (in the presence of ATP) in either 5'- to 3'- or 3'- to 5'-direction to yield 5'-phosphooligonucleotides.. It catalyses the reaction Couples ATP hydrolysis with the unwinding of duplex DNA by translocating in the 3'-5' direction.. It carries out the reaction ATP + H2O = ADP + phosphate + H(+). A helicase/nuclease that prepares dsDNA breaks (DSB) for recombinational DNA repair. Binds to DSBs and unwinds DNA via a highly rapid and processive ATP-dependent bidirectional helicase activity. In the holoenzyme this subunit contributes ATPase, 3'-5' helicase, exonuclease activity and loads RecA onto ssDNA. Unlike the case in E.coli, suppresses RecA-dependent homologous recombination, is instead required for single-strand annealing pathway repair of DSB. In Mycobacterium tuberculosis (strain CDC 1551 / Oshkosh), this protein is RecBCD enzyme subunit RecB.